A 41-amino-acid chain; its full sequence is Large ribosomal subunit protein bL36 (41 aa).

Belongs to the bacterial ribosomal protein bL36 family.

This Rhizobium etli (strain CIAT 652) protein is Large ribosomal subunit protein bL36.